Reading from the N-terminus, the 254-residue chain is Leucyl/phenylalanyl-tRNA--protein transferase (254 aa).

The protein belongs to the L/F-transferase family.

The protein localises to the cytoplasm. It catalyses the reaction N-terminal L-lysyl-[protein] + L-leucyl-tRNA(Leu) = N-terminal L-leucyl-L-lysyl-[protein] + tRNA(Leu) + H(+). It carries out the reaction N-terminal L-arginyl-[protein] + L-leucyl-tRNA(Leu) = N-terminal L-leucyl-L-arginyl-[protein] + tRNA(Leu) + H(+). The enzyme catalyses L-phenylalanyl-tRNA(Phe) + an N-terminal L-alpha-aminoacyl-[protein] = an N-terminal L-phenylalanyl-L-alpha-aminoacyl-[protein] + tRNA(Phe). Its function is as follows. Functions in the N-end rule pathway of protein degradation where it conjugates Leu, Phe and, less efficiently, Met from aminoacyl-tRNAs to the N-termini of proteins containing an N-terminal arginine or lysine. This Bordetella bronchiseptica (strain ATCC BAA-588 / NCTC 13252 / RB50) (Alcaligenes bronchisepticus) protein is Leucyl/phenylalanyl-tRNA--protein transferase.